We begin with the raw amino-acid sequence, 206 residues long: Small ribosomal subunit protein uS4 (206 aa).

Residues 1–16 are compositionally biased toward basic and acidic residues; the sequence is MTKRQESKYKIDRRMG. The interval 1–46 is disordered; sequence MTKRQESKYKIDRRMGENIWGRPKSPVNRREYGPGQHGQRRKGKLS. Positions 94 to 154 constitute an S4 RNA-binding domain; sequence RRLDAVVYRA…EKSKQLAIVL (61 aa).

The protein belongs to the universal ribosomal protein uS4 family. As to quaternary structure, part of the 30S ribosomal subunit. Contacts protein S5. The interaction surface between S4 and S5 is involved in control of translational fidelity.

One of the primary rRNA binding proteins, it binds directly to 16S rRNA where it nucleates assembly of the body of the 30S subunit. Functionally, with S5 and S12 plays an important role in translational accuracy. The protein is Small ribosomal subunit protein uS4 of Parvibaculum lavamentivorans (strain DS-1 / DSM 13023 / NCIMB 13966).